The following is a 983-amino-acid chain: Probable beta-galactosidase C (983 aa).

Positions 1–23 (MRIFSFLFLLLLGILTGQGLVSG) are cleaved as a signal peptide. Tyrosine 82, asparagine 127, alanine 128, glutamate 129, and asparagine 187 together coordinate substrate. Glutamate 188 serves as the catalytic Proton donor. Asparagine 197 carries N-linked (GlcNAc...) asparagine glycosylation. Tyrosine 251 lines the substrate pocket. Cysteine 257 and cysteine 304 are disulfide-bonded. Asparagine 276 carries an N-linked (GlcNAc...) asparagine glycan. Glutamate 287 functions as the Nucleophile in the catalytic mechanism. Tyrosine 353 provides a ligand contact to substrate. N-linked (GlcNAc...) asparagine glycans are attached at residues asparagine 391, asparagine 434, asparagine 466, asparagine 516, asparagine 601, asparagine 676, asparagine 714, asparagine 719, and asparagine 804.

It belongs to the glycosyl hydrolase 35 family.

The protein localises to the secreted. The catalysed reaction is Hydrolysis of terminal non-reducing beta-D-galactose residues in beta-D-galactosides.. In terms of biological role, cleaves beta-linked terminal galactosyl residues from gangliosides, glycoproteins, and glycosaminoglycans. The polypeptide is Probable beta-galactosidase C (lacC) (Neosartorya fischeri (strain ATCC 1020 / DSM 3700 / CBS 544.65 / FGSC A1164 / JCM 1740 / NRRL 181 / WB 181) (Aspergillus fischerianus)).